The following is a 74-amino-acid chain: MIQAAKIIGTGLATTGLIGAGVGIGVVFGALILGVARNPSLRGLLFSYAILGFAFSEATGLFALMMAFLLLYVA.

Helical transmembrane passes span 16-36 and 50-70; these read GLIGAGVGIGVVFGALILGVA and ILGFAFSEATGLFALMMAFLL.

This sequence belongs to the ATPase C chain family. F-type ATPases have 2 components, CF(1) - the catalytic core - and CF(0) - the membrane proton channel. CF(1) has five subunits: alpha(3), beta(3), gamma(1), delta(1), epsilon(1). CF(0) has three main subunits: a, b and c.

The protein localises to the mitochondrion membrane. Functionally, mitochondrial membrane ATP synthase (F(1)F(0) ATP synthase or Complex V) produces ATP from ADP in the presence of a proton gradient across the membrane which is generated by electron transport complexes of the respiratory chain. F-type ATPases consist of two structural domains, F(1) - containing the extramembraneous catalytic core and F(0) - containing the membrane proton channel, linked together by a central stalk and a peripheral stalk. During catalysis, ATP synthesis in the catalytic domain of F(1) is coupled via a rotary mechanism of the central stalk subunits to proton translocation. Part of the complex F(0) domain. A homomeric c-ring of probably 10 subunits is part of the complex rotary element. The polypeptide is ATP synthase subunit 9, mitochondrial (ATP9) (Trichophyton rubrum (Athlete's foot fungus)).